Reading from the N-terminus, the 427-residue chain is Glycophorin-binding protein-related antigen (427 aa).

GBP repeat units follow at residues Leu-109 to Glu-149, Thr-150 to Glu-189, Ser-190 to Glu-229, Thr-230 to Thr-269, Ser-270 to Glu-307, Thr-308 to Glu-347, Thr-348 to Glu-387, and Thr-388 to Ser-427.

The polypeptide is Glycophorin-binding protein-related antigen (GBPH) (Plasmodium falciparum (isolate FCBR / Columbia)).